Reading from the N-terminus, the 612-residue chain is Apoptosis-inducing factor 1, mitochondrial (612 aa).

Short sequence motifs (mitochondrial localization signal) lie at residues 1-30 and 62-88; these read MFRC…PKQR and KMDN…KTIK. The transit peptide at 1-54 directs the protein to the mitochondrion; the sequence is MFRCGGLAGAFKQKLVPLVRTVYVQRPKQRNRLPGNLFQQWRVPLELQMARQMA. A propeptide spans 55–101 (removed in mature form); sequence SSGSSGGKMDNSVLVLIVGLSTIGAGAYAYKTIKEDQKRYNERVMGL. At lysine 108 the chain carries N6-succinyllysine. A Phosphoserine modification is found at serine 115. The segment at 133–482 is FAD-dependent oxidoreductase; that stretch reads FLLIGGGTAA…KPYWHQSMFW (350 aa). Residues 137–141, 163–164, arginine 171, and lysine 176 contribute to the FAD site; these read GGGTA and ED. Tryptophan 195 lines the NAD(+) pocket. Valine 232 is a binding site for FAD. A Glycyl lysine isopeptide (Lys-Gly) (interchain with G-Cter in ubiquitin) cross-link involves residue lysine 254. The residue at position 267 (serine 267) is a Phosphoserine. Position 284 (arginine 284) interacts with FAD. NAD(+) is bound by residues 307–310, glutamate 335, and lysine 341; that span reads GGFL. Residue serine 370 is modified to Phosphoserine. N6-acetyllysine is present on lysine 387. Position 398 (glycine 398) interacts with NAD(+). Residue aspartate 437 participates in FAD binding. Positions 445-450 match the Nuclear localization signal motif; sequence KLGRRR. NAD(+) contacts are provided by residues 452–453, tryptophan 482, and glutamate 492; that span reads EH. Residues 453-454 and tryptophan 482 each bind FAD; that span reads HH. Over residues 512 to 528 the composition is skewed to polar residues; sequence AQDNPKSATEQSGTGIR. Residues 512 to 551 are disordered; the sequence is AQDNPKSATEQSGTGIRSESETESEASEITIPPSAPAVPQ. Position 520 is a phosphothreonine (threonine 520). 2 positions are modified to phosphoserine: serine 523 and serine 529. An NAD(+)-binding site is contributed by asparagine 582. The residue at position 592 (lysine 592) is an N6-acetyllysine.

This sequence belongs to the FAD-dependent oxidoreductase family. As to quaternary structure, monomer (oxidized form). Homodimer (reduced form). Upon reduction with NADH, undergoes dimerization and forms tight, long-lived FADH2-NAD charge transfer complexes (CTC) resistant to oxidation. Also dimerizes with isoform 3 preventing its release from mitochondria. Interacts with XIAP/BIRC4. Interacts (via N-terminus) with EIF3G (via C-terminus). Interacts with PRELID1. Interacts with CHCHD4; the interaction increases in presence of NADH. Interacts with processed form of PARP1 (Poly [ADP-ribose] polymerase 1, processed C-terminus); interaction is mediated with poly-ADP-ribose chains attached to PARP1, promoting translocation into the nucleus. FAD is required as a cofactor. Post-translationally, under normal conditions, a 54-residue N-terminal segment is first proteolytically removed during or just after translocation into the mitochondrial intermembrane space (IMS) by the mitochondrial processing peptidase (MPP) to form the inner-membrane-anchored mature form (AIFmit). During apoptosis, it is further proteolytically processed at amino-acid position 101 leading to the generation of the mature form, which is confined to the mitochondrial IMS in a soluble form (AIFsol). AIFsol is released to the cytoplasm in response to specific death signals, and translocated to the nucleus, where it induces nuclear apoptosis in a caspase-independent manner. In terms of processing, ubiquitination by XIAP/BIRC4 does not lead to proteasomal degradation. Ubiquitination at Lys-254 by XIAP/BIRC4 blocks its ability to bind DNA and induce chromatin degradation, thereby inhibiting its ability to induce cell death. As to expression, expressed in cortical neurons (at protein level). In terms of tissue distribution, expressed in liver (at protein level).

The protein resides in the mitochondrion intermembrane space. The protein localises to the mitochondrion inner membrane. Its subcellular location is the cytoplasm. It localises to the nucleus. It is found in the perinuclear region. The protein resides in the mitochondrion. The protein localises to the cytosol. The enzyme catalyses A + NADH + H(+) = AH2 + NAD(+). Its function is as follows. Functions both as NADH oxidoreductase and as regulator of apoptosis. In response to apoptotic stimuli, it is released from the mitochondrion intermembrane space into the cytosol and to the nucleus, where it functions as a proapoptotic factor in a caspase-independent pathway. Release into the cytoplasm is mediated upon binding to poly-ADP-ribose chains. The soluble form (AIFsol) found in the nucleus induces 'parthanatos' i.e. caspase-independent fragmentation of chromosomal DNA. Binds to DNA in a sequence-independent manner. Interacts with EIF3G, and thereby inhibits the EIF3 machinery and protein synthesis, and activates caspase-7 to amplify apoptosis. Plays a critical role in caspase-independent, pyknotic cell death in hydrogen peroxide-exposed cells. In contrast, participates in normal mitochondrial metabolism. Plays an important role in the regulation of respiratory chain biogenesis by interacting with CHCHD4 and controlling CHCHD4 mitochondrial import. The sequence is that of Apoptosis-inducing factor 1, mitochondrial from Mus musculus (Mouse).